The sequence spans 441 residues: Proline--tRNA ligase (441 aa).

This sequence belongs to the class-II aminoacyl-tRNA synthetase family. ProS type 2 subfamily. In terms of assembly, homodimer.

Its subcellular location is the cytoplasm. The catalysed reaction is tRNA(Pro) + L-proline + ATP = L-prolyl-tRNA(Pro) + AMP + diphosphate. Functionally, catalyzes the attachment of proline to tRNA(Pro) in a two-step reaction: proline is first activated by ATP to form Pro-AMP and then transferred to the acceptor end of tRNA(Pro). The sequence is that of Proline--tRNA ligase from Methylobacterium radiotolerans (strain ATCC 27329 / DSM 1819 / JCM 2831 / NBRC 15690 / NCIMB 10815 / 0-1).